The primary structure comprises 382 residues: 8-amino-7-oxononanoate synthase (382 aa).

A substrate-binding site is contributed by Arg26. Position 104–105 (104–105 (GY)) interacts with pyridoxal 5'-phosphate. Position 129 (His129) interacts with substrate. Pyridoxal 5'-phosphate contacts are provided by residues Ser175, 200-203 (DEAH), and 232-235 (TLSK). Lys235 is modified (N6-(pyridoxal phosphate)lysine). Thr345 serves as a coordination point for substrate.

The protein belongs to the class-II pyridoxal-phosphate-dependent aminotransferase family. BioF subfamily. As to quaternary structure, homodimer. It depends on pyridoxal 5'-phosphate as a cofactor.

The enzyme catalyses 6-carboxyhexanoyl-[ACP] + L-alanine + H(+) = (8S)-8-amino-7-oxononanoate + holo-[ACP] + CO2. It participates in cofactor biosynthesis; biotin biosynthesis. Functionally, catalyzes the decarboxylative condensation of pimeloyl-[acyl-carrier protein] and L-alanine to produce 8-amino-7-oxononanoate (AON), [acyl-carrier protein], and carbon dioxide. The chain is 8-amino-7-oxononanoate synthase from Mycobacterium sp. (strain JLS).